We begin with the raw amino-acid sequence, 396 residues long: Phospholipase A1-II 4 (396 aa).

S221 functions as the Acyl-ester intermediate in the catalytic mechanism. Active-site charge relay system residues include S221, D282, and H319.

Belongs to the AB hydrolase superfamily. Lipase family.

It localises to the cytoplasm. Functionally, acylhydrolase that catalyzes the hydrolysis of phospholipids at the sn-1 position. The polypeptide is Phospholipase A1-II 4 (Oryza sativa subsp. japonica (Rice)).